A 439-amino-acid chain; its full sequence is Enolase (439 aa).

Glutamine 163 is a binding site for (2R)-2-phosphoglycerate. The Proton donor role is filled by glutamate 205. 3 residues coordinate Mg(2+): aspartate 242, glutamate 287, and aspartate 314. 4 residues coordinate (2R)-2-phosphoglycerate: lysine 339, arginine 368, serine 369, and lysine 390. The active-site Proton acceptor is lysine 339.

This sequence belongs to the enolase family. Requires Mg(2+) as cofactor.

It is found in the cytoplasm. It localises to the secreted. Its subcellular location is the cell surface. It carries out the reaction (2R)-2-phosphoglycerate = phosphoenolpyruvate + H2O. The protein operates within carbohydrate degradation; glycolysis; pyruvate from D-glyceraldehyde 3-phosphate: step 4/5. Catalyzes the reversible conversion of 2-phosphoglycerate (2-PG) into phosphoenolpyruvate (PEP). It is essential for the degradation of carbohydrates via glycolysis. This is Enolase from Levilactobacillus brevis (strain ATCC 367 / BCRC 12310 / CIP 105137 / JCM 1170 / LMG 11437 / NCIMB 947 / NCTC 947) (Lactobacillus brevis).